Here is a 129-residue protein sequence, read N- to C-terminus: KVYGRCELAAAMKRLGLDNYRGYSLGNWVCAAKFESNFNTHATNRNTDGSTDYGILQINSRWWCNDGRTPGSRNLCNIPCSALLSSDITASVNCAKKIVSGGNGMSAWVAWRNRCKGTDVHAWIRGCRL.

The C-type lysozyme domain maps to K1–L129. Intrachain disulfides connect C6–C127, C30–C115, C64–C80, and C76–C94. Active-site residues include E35 and D52.

It belongs to the glycosyl hydrolase 22 family. As to quaternary structure, monomer.

Its subcellular location is the secreted. It catalyses the reaction Hydrolysis of (1-&gt;4)-beta-linkages between N-acetylmuramic acid and N-acetyl-D-glucosamine residues in a peptidoglycan and between N-acetyl-D-glucosamine residues in chitodextrins.. In terms of biological role, lysozymes have primarily a bacteriolytic function; those in tissues and body fluids are associated with the monocyte-macrophage system and enhance the activity of immunoagents. The chain is Lysozyme C (LYZ) from Tragopan temminckii (Temminck's tragopan).